The sequence spans 450 residues: Phospho-2-dehydro-3-deoxyheptonate aldolase (450 aa).

Positions 1–13 (MTVNAKTSPSAGN) are enriched in polar residues. The interval 1–20 (MTVNAKTSPSAGNTWRDLPA) is disordered.

The protein belongs to the class-II DAHP synthase family. Homodimer.

It catalyses the reaction D-erythrose 4-phosphate + phosphoenolpyruvate + H2O = 7-phospho-2-dehydro-3-deoxy-D-arabino-heptonate + phosphate. It participates in metabolic intermediate biosynthesis; chorismate biosynthesis; chorismate from D-erythrose 4-phosphate and phosphoenolpyruvate: step 1/7. The chain is Phospho-2-dehydro-3-deoxyheptonate aldolase (aroH) from Streptomyces coelicolor (strain ATCC BAA-471 / A3(2) / M145).